A 554-amino-acid polypeptide reads, in one-letter code: Phosphomethylpyrimidine synthase (554 aa).

Substrate-binding positions include N188, M217, Y246, H282, 302-304, 343-346, and E382; these read SRG and DGLR. H386 is a Zn(2+) binding site. A substrate-binding site is contributed by Y409. Position 450 (H450) interacts with Zn(2+). C530, C533, and C538 together coordinate [4Fe-4S] cluster.

Belongs to the ThiC family. Homodimer. [4Fe-4S] cluster serves as cofactor.

It carries out the reaction 5-amino-1-(5-phospho-beta-D-ribosyl)imidazole + S-adenosyl-L-methionine = 4-amino-2-methyl-5-(phosphooxymethyl)pyrimidine + CO + 5'-deoxyadenosine + formate + L-methionine + 3 H(+). It functions in the pathway cofactor biosynthesis; thiamine diphosphate biosynthesis. Catalyzes the synthesis of the hydroxymethylpyrimidine phosphate (HMP-P) moiety of thiamine from aminoimidazole ribotide (AIR) in a radical S-adenosyl-L-methionine (SAM)-dependent reaction. The protein is Phosphomethylpyrimidine synthase of Coxiella burnetii (strain Dugway 5J108-111).